The primary structure comprises 622 residues: Threonine--tRNA ligase (622 aa).

The tract at residues 1-141 is editing domain; that stretch reads MKTLLIHSDY…SRKITTERKE (141 aa). The segment at 199-498 is catalytic; sequence PHVKYIKEKE…TLENKPPALP (300 aa). 3 residues coordinate Zn(2+): Cys-291, His-343, and His-467.

It belongs to the class-II aminoacyl-tRNA synthetase family. As to quaternary structure, homodimer. The cofactor is Zn(2+).

It is found in the cytoplasm. It catalyses the reaction tRNA(Thr) + L-threonine + ATP = L-threonyl-tRNA(Thr) + AMP + diphosphate + H(+). In terms of biological role, catalyzes the attachment of threonine to tRNA(Thr) in a two-step reaction: L-threonine is first activated by ATP to form Thr-AMP and then transferred to the acceptor end of tRNA(Thr). Also edits incorrectly charged L-seryl-tRNA(Thr). The chain is Threonine--tRNA ligase from Methanococcus maripaludis (strain C7 / ATCC BAA-1331).